A 517-amino-acid chain; its full sequence is UPF0522 protein B (517 aa).

Positions 1–19 (MNKTIILLLISIIFEIVIS) are cleaved as a signal peptide. Residues N148, N245, N333, N345, N370, N423, N432, and N495 are each glycosylated (N-linked (GlcNAc...) asparagine).

Belongs to the UPF0522 family.

It is found in the secreted. The protein is UPF0522 protein B of Dictyostelium discoideum (Social amoeba).